The primary structure comprises 304 residues: Glutaminase (304 aa).

Positions 63, 114, 158, 165, 189, 240, and 258 each coordinate substrate.

Belongs to the glutaminase family. As to quaternary structure, homotetramer.

It carries out the reaction L-glutamine + H2O = L-glutamate + NH4(+). The polypeptide is Glutaminase (Shewanella oneidensis (strain ATCC 700550 / JCM 31522 / CIP 106686 / LMG 19005 / NCIMB 14063 / MR-1)).